A 575-amino-acid polypeptide reads, in one-letter code: Intermediate filament protein ifd-1 (575 aa).

The segment at 1-56 is head; that stretch reads MSKLNPRVAHNPVLSRIIESGRTNLPSGITSAGSLSAYAQAAAVTIRDNRDREKRE. The 354-residue stretch at 53 to 406 folds into the IF rod domain; it reads EKREIADLNN…KLMEQAENLR (354 aa). The tract at residues 57-88 is coil 1A; the sequence is IADLNNRLARYVEKVRFLEAQNRVLENDIGLF. The tract at residues 89–102 is linker 1; it reads RQAAHIHTGKVRDY. Positions 103–240 are coil 1B; it reads YDAEKTSLAT…STHEIAIREE (138 aa). The tract at residues 241–258 is linker 12; that stretch reads INKARRDSTDKNREFFHR. Residues 259–408 form a coil 2 region; that stretch reads ELHMSMKEIR…MEQAENLRTS (150 aa). A tail region spans residues 409-572; sequence YQSDFVIDTP…DEVGWYAHVS (164 aa). Residues 459-575 enclose the LTD domain; the sequence is NTQQFRSYGK…GWYAHVSYSH (117 aa).

This sequence belongs to the intermediate filament family.

Its subcellular location is the cytoplasm. In terms of biological role, cytoplasmic intermediate filaments provide mechanical strength to cells. Not essential protein. The protein is Intermediate filament protein ifd-1 of Caenorhabditis elegans.